The chain runs to 452 residues: Cytoplasmic tRNA 2-thiolation protein 2 (452 aa).

It belongs to the CTU2/NCS2 family.

The protein resides in the cytoplasm. It participates in tRNA modification; 5-methoxycarbonylmethyl-2-thiouridine-tRNA biosynthesis. Its function is as follows. Plays a central role in 2-thiolation of mcm(5)S(2)U at tRNA wobble positions of tRNA(Lys), tRNA(Glu) and tRNA(Gln). May act by forming a heterodimer with NCS6 that ligates sulfur from thiocarboxylated URM1 onto the uridine of tRNAs at wobble position. Prior mcm(5) tRNA modification by the elongator complex is required for 2-thiolation. May also be involved in protein urmylation. This is Cytoplasmic tRNA 2-thiolation protein 2 from Candida albicans (strain SC5314 / ATCC MYA-2876) (Yeast).